We begin with the raw amino-acid sequence, 271 residues long: Replication-associated protein A (271 aa).

Residues 11–114 (LHRNANTFLT…PLAVFERGTF (104 aa)) form the CRESS-DNA virus Rep endonuclease domain. The short motif at 18–21 (FLTY) is the RCR-1 element. Residues glutamate 52, histidine 60, and histidine 62 each contribute to the a divalent metal cation site. Positions 60-62 (HLH) match the RCR-2 motif. The active-site For DNA cleavage activity is tyrosine 100. Positions 100–103 (YILK) match the RCR-3 motif. Glutamate 104 is an a divalent metal cation binding site. Residues 174-186 (SANKLFPDIQEEF) form an oligomerization region. The segment at 197–201 (LLCNE) is binding to RBR1. The tract at residues 220–229 (MLLQPTCYTV) is transactivation. Residues 244 to 264 (SQQMKDQESRASTSSVQQGQG) show a composition bias toward polar residues. The interval 244-271 (SQQMKDQESRASTSSVQQGQGNLLGPEV) is disordered.

The protein belongs to the geminiviridae Rep protein family. Homooligomer. Interacts with host retinoblastoma-related protein 1 (RBR1), and may thereby deregulate the host cell cycle. Part of the C- and V-complexes which are RepA-Rep-DNA complexes involved in the c-sense and v-sense transcription. Mg(2+) is required as a cofactor. Mn(2+) serves as cofactor.

It localises to the host nucleus. It is found in the host cytoplasm. Functionally, implicated in enhancement of V-sense gene expression. Acts a an inhibitor of C-sense gene transcription. The polypeptide is Replication-associated protein A (Avena sativa (Oat)).